Here is a 180-residue protein sequence, read N- to C-terminus: MQITVSGLPGSGTTTLSRLLSDYYELELISSGEIFRRMAKERGMSLADFGAMAEKDPSIDLDIDKNQKSIIHTQDDLVLESRLAGHMAKGVPNVLKIWIKAPLLTRVKRIQRREKTISFDEELAKTVEREKSEALRYKNYYGIDITDLSIYDIVIDSEKWNQYQTLDILRVAIDALVGPE.

Residue 7 to 15 (GLPGSGTTT) coordinates ATP.

The protein belongs to the cytidylate kinase family. Type 2 subfamily.

Its subcellular location is the cytoplasm. It catalyses the reaction CMP + ATP = CDP + ADP. It carries out the reaction dCMP + ATP = dCDP + ADP. The chain is Cytidylate kinase from Methanosarcina acetivorans (strain ATCC 35395 / DSM 2834 / JCM 12185 / C2A).